Here is a 320-residue protein sequence, read N- to C-terminus: Beta-ketoacyl-[acyl-carrier-protein] synthase III (320 aa).

Residues Cys114 and His247 contribute to the active site. Positions Gln248–Arg252 are ACP-binding. Residue Asn277 is part of the active site.

The protein belongs to the thiolase-like superfamily. FabH family. As to quaternary structure, homodimer.

The protein resides in the cytoplasm. It carries out the reaction malonyl-[ACP] + acetyl-CoA + H(+) = 3-oxobutanoyl-[ACP] + CO2 + CoA. Its pathway is lipid metabolism; fatty acid biosynthesis. In terms of biological role, catalyzes the condensation reaction of fatty acid synthesis by the addition to an acyl acceptor of two carbons from malonyl-ACP. Catalyzes the first condensation reaction which initiates fatty acid synthesis and may therefore play a role in governing the total rate of fatty acid production. Possesses both acetoacetyl-ACP synthase and acetyl transacylase activities. Its substrate specificity determines the biosynthesis of branched-chain and/or straight-chain of fatty acids. This chain is Beta-ketoacyl-[acyl-carrier-protein] synthase III, found in Neisseria meningitidis serogroup A / serotype 4A (strain DSM 15465 / Z2491).